The sequence spans 597 residues: UvrABC system protein C (597 aa).

Residues 15 to 93 enclose the GIY-YIG domain; that stretch reads NSPGVYQYFD…IKKHQPRFNV (79 aa). The UVR domain maps to 207–242; the sequence is KDSLQRFRNQMKQHSEKMEFEDAQRIKNKIDVLENY.

This sequence belongs to the UvrC family. As to quaternary structure, interacts with UvrB in an incision complex.

It localises to the cytoplasm. Functionally, the UvrABC repair system catalyzes the recognition and processing of DNA lesions. UvrC both incises the 5' and 3' sides of the lesion. The N-terminal half is responsible for the 3' incision and the C-terminal half is responsible for the 5' incision. This is UvrABC system protein C from Christiangramia forsetii (strain DSM 17595 / CGMCC 1.15422 / KT0803) (Gramella forsetii).